The primary structure comprises 808 residues: Copal-8-ol diphosphate hydratase, chloroplastic (808 aa).

Residues 1-50 constitute a chloroplast transit peptide; the sequence is MAFTFTSAHLFLPVTENHSVHVNYSIPPGNWRLWSTAKGGSNKLDIRRLR. Positions 190 to 219 form a coiled coil; that stretch reads DKCQKGLKFFRDNISKLEKENVEASAQMLS. Substrate is bound at residue K256. Mg(2+)-binding residues include D391 and D393. Residues 391–394 carry the DXDD motif motif; it reads DLDD. Residue K477 coordinates substrate.

This sequence belongs to the terpene synthase family. The cofactor is Mg(2+). As to expression, expressed in stems, leaves and trichomes. Not detected in roots and seeds. Higher expression in young leaves than in fully expanded leaves.

The protein resides in the plastid. It localises to the chloroplast. It catalyses the reaction (2E,6E,10E)-geranylgeranyl diphosphate + H2O = 8-hydroxycopalyl diphosphate. It functions in the pathway secondary metabolite biosynthesis; terpenoid biosynthesis. In terms of biological role, involved in the biosynthesis of oxygen-containing labdane-type diterpenes that may be implicated in direct and indirect defense mechanisms. No activity with geranyl diphosphate or farnesyl diphosphate as substrate. The protein is Copal-8-ol diphosphate hydratase, chloroplastic of Cistus creticus subsp. creticus (Rock rose).